Consider the following 208-residue polypeptide: Transmembrane protein 222 (208 aa).

Residues 1 to 26 (MAEAEGSSLLLLPPPPPPPRMAEVEA) form a disordered region. The Extracellular portion of the chain corresponds to 1-55 (MAEAEGSSLLLLPPPPPPPRMAEVEAPTAAETDMKQYQGSGGVAMDVERSRFPYC). A helical transmembrane segment spans residues 56-76 (VVWTPIPVLTWFFPIIGHMGI). Residues 77-164 (CTSTGVIRDF…MRYNNSTNWN (88 aa)) lie on the Cytoplasmic side of the membrane. A helical transmembrane segment spans residues 165-185 (MVTLCFFCLLYGKYVSVGAFV). A topological domain (extracellular) is located at residue Lys186. The helical transmembrane segment at 187–207 (TWLPFILLLGIILTVSLVFNL) threads the bilayer. Arg208 is a topological domain (cytoplasmic).

In terms of tissue distribution, widely expressed. The highest expression is observed in the brain.

The protein resides in the membrane. Its subcellular location is the cell projection. The protein localises to the dendrite. This chain is Transmembrane protein 222 (TMEM222), found in Homo sapiens (Human).